The primary structure comprises 479 residues: Glucagon receptor (479 aa).

The N-terminal stretch at 1 to 25 (MPPARLRHPHLLLLLLLACQPQAPA) is a signal peptide. Residues 26-136 (AQAMDFLFQK…ELGVQREVAE (111 aa)) are Extracellular-facing. 3 disulfide bridges follow: Cys43–Cys67, Cys58–Cys100, and Cys81–Cys121. N-linked (GlcNAc...) asparagine glycosylation is found at Asn46, Asn59, Asn74, Asn78, and Asn117. The helical transmembrane segment at 137-161 (MYSSFQAMYTAGYSLSLAALLLALA) threads the bilayer. Residues 162–173 (ILLGLSKLHCTR) are Cytoplasmic-facing. A helical membrane pass occupies residues 174-198 (NYIHANLLASFVLRASSVLALDALL). Over 199 to 225 (KTRYSQRLGDDLSVSIWLSDEAVAGCR) the chain is Extracellular. Cys224 and Cys294 are oxidised to a cystine. Residues 226 to 249 (VAAVFMQYGVVANYCWLLVEGVYL) traverse the membrane as a helical segment. Topologically, residues 250 to 263 (HSLLRQATIPERSC) are cytoplasmic. The chain crosses the membrane as a helical span at residues 264-285 (FPLYLAIGWGAPMLFVIPWAVV). The Extracellular segment spans residues 286 to 303 (KCLFENIQCWTSNDNMGF). Residues 304-326 (WWILRFPVFLAILINFSIFIRVL) form a helical membrane-spanning segment. Residues 327 to 350 (HVLVAKLRAHQMRCTDYKFRLARS) lie on the Cytoplasmic side of the membrane. The helical transmembrane segment at 351–369 (TLTLIPLLGVHEVVFAFVT) threads the bilayer. Over 370 to 381 (DEHAQGALRSAK) the chain is Extracellular. A helical transmembrane segment spans residues 382–402 (LFFDLFLSSFQGLLVAVLYCF). Residues 403–479 (LNKEVQAELL…GLPGVAENPF (77 aa)) lie on the Cytoplasmic side of the membrane. A disordered region spans residues 426–479 (KAHRVGSHSARPPSGPPSEKLLLSTGGSSNGTSQEPSAETHLASGLPGVAENPF). Residues 446 to 458 (LLLSTGGSSNGTS) show a composition bias toward low complexity. Residue Ser458 is modified to Phosphoserine.

The protein belongs to the G-protein coupled receptor 2 family. Ligand-binding promotes phosphorylation of serine residues in the C-terminal cytoplasmic domain. Phosphorylation is important for receptor endocytosis after ligand-binding.

It localises to the cell membrane. Its function is as follows. G-protein coupled receptor for glucagon that plays a central role in the regulation of blood glucose levels and glucose homeostasis. Regulates the rate of hepatic glucose production by promoting glycogen hydrolysis and gluconeogenesis. Plays an important role in mediating the responses to fasting. Ligand binding causes a conformation change that triggers signaling via guanine nucleotide-binding proteins (G proteins) and modulates the activity of down-stream effectors, such as adenylate cyclase. Promotes activation of adenylate cyclase. Besides, plays a role in signaling via a phosphatidylinositol-calcium second messenger system. In Sus scrofa (Pig), this protein is Glucagon receptor.